A 141-amino-acid chain; its full sequence is Hemoglobin subunit alpha-D (141 aa).

The Globin domain maps to 1–141 (MLNAEDKKLI…VSAVLAEKYR (141 aa)). Heme b contacts are provided by His-58 and His-87.

It belongs to the globin family. As to quaternary structure, heterotetramer of two alpha-D chains and two beta chains. As to expression, red blood cells.

Involved in oxygen transport from the lung to the various peripheral tissues. This chain is Hemoglobin subunit alpha-D (HBAD), found in Phasianus colchicus colchicus (Black-necked pheasant).